The primary structure comprises 159 residues: 2-C-methyl-D-erythritol 2,4-cyclodiphosphate synthase (159 aa).

2 residues coordinate a divalent metal cation: aspartate 8 and histidine 10. 4-CDP-2-C-methyl-D-erythritol 2-phosphate is bound by residues 8–10 and 34–35; these read DVH and HS. Residue histidine 42 coordinates a divalent metal cation. 4-CDP-2-C-methyl-D-erythritol 2-phosphate contacts are provided by residues 56 to 58, 100 to 106, 132 to 135, phenylalanine 139, and arginine 142; these read DIG, AQAPKMA, and TTTE.

The protein belongs to the IspF family. As to quaternary structure, homotrimer. A divalent metal cation serves as cofactor.

It carries out the reaction 4-CDP-2-C-methyl-D-erythritol 2-phosphate = 2-C-methyl-D-erythritol 2,4-cyclic diphosphate + CMP. It functions in the pathway isoprenoid biosynthesis; isopentenyl diphosphate biosynthesis via DXP pathway; isopentenyl diphosphate from 1-deoxy-D-xylulose 5-phosphate: step 4/6. Its function is as follows. Involved in the biosynthesis of isopentenyl diphosphate (IPP) and dimethylallyl diphosphate (DMAPP), two major building blocks of isoprenoid compounds. Catalyzes the conversion of 4-diphosphocytidyl-2-C-methyl-D-erythritol 2-phosphate (CDP-ME2P) to 2-C-methyl-D-erythritol 2,4-cyclodiphosphate (ME-CPP) with a corresponding release of cytidine 5-monophosphate (CMP). The protein is 2-C-methyl-D-erythritol 2,4-cyclodiphosphate synthase of Marinobacter nauticus (strain ATCC 700491 / DSM 11845 / VT8) (Marinobacter aquaeolei).